The chain runs to 323 residues: Phosphate acyltransferase (323 aa).

It belongs to the PlsX family. In terms of assembly, homodimer. Probably interacts with PlsY.

Its subcellular location is the cytoplasm. The enzyme catalyses a fatty acyl-[ACP] + phosphate = an acyl phosphate + holo-[ACP]. The protein operates within lipid metabolism; phospholipid metabolism. Catalyzes the reversible formation of acyl-phosphate (acyl-PO(4)) from acyl-[acyl-carrier-protein] (acyl-ACP). This enzyme utilizes acyl-ACP as fatty acyl donor, but not acyl-CoA. This Finegoldia magna (strain ATCC 29328 / DSM 20472 / WAL 2508) (Peptostreptococcus magnus) protein is Phosphate acyltransferase.